Reading from the N-terminus, the 66-residue chain is uncharacterized protein (66 aa).

Positions 1-19 (MRRLYRHLASFFLLPSCPG) are cleaved as a signal peptide.

This is an uncharacterized protein from Saccharomyces cerevisiae (strain ATCC 204508 / S288c) (Baker's yeast).